The chain runs to 393 residues: Squamosa promoter-binding-like protein 17 (393 aa).

Low complexity predominate over residues A40–S49. Residues A40–P67 form a disordered region. The SBP-type zinc-finger motif lies at P71–P148. C74, C79, C96, H99, C115, C118, H122, and C134 together coordinate Zn(2+). The Bipartite nuclear localization signal signature appears at K131 to K147. The segment covering R137–P148 has biased composition (basic residues). Disordered stretches follow at residues R137–G158, W273–P301, and G317–L393. Polar residues-rich tracts occupy residues W273–S293 and G380–L393.

In terms of tissue distribution, expressed in young panicles.

It is found in the nucleus. Trans-acting factor that binds specifically to the consensus nucleotide sequence 5'-TNCGTACAA-3'. May be involved in panicle development. This is Squamosa promoter-binding-like protein 17 (SPL17) from Oryza sativa subsp. japonica (Rice).